Reading from the N-terminus, the 131-residue chain is Small ribosomal subunit protein uS8 (131 aa).

This sequence belongs to the universal ribosomal protein uS8 family. Part of the 30S ribosomal subunit. Contacts proteins S5 and S12.

Functionally, one of the primary rRNA binding proteins, it binds directly to 16S rRNA central domain where it helps coordinate assembly of the platform of the 30S subunit. The polypeptide is Small ribosomal subunit protein uS8 (Burkholderia ambifaria (strain MC40-6)).